The following is a 403-amino-acid chain: High affinity transport system protein p37 (403 aa).

An N-terminal signal peptide occupies residues 1 to 23 (MLKKLKNFILFSSIFSPIAFAIS). The N-palmitoyl cysteine moiety is linked to residue Cys24. A lipid anchor (S-diacylglycerol cysteine) is attached at Cys24.

The protein localises to the cell membrane. Functionally, P37 is part of a high-affinity transport system. In Mesomycoplasma hyorhinis (Mycoplasma hyorhinis), this protein is High affinity transport system protein p37 (p37).